Reading from the N-terminus, the 248-residue chain is Ribonuclease PH (248 aa).

Residues Arg-93 and 131–133 (GTR) contribute to the phosphate site.

It belongs to the RNase PH family. In terms of assembly, homohexameric ring arranged as a trimer of dimers.

It catalyses the reaction tRNA(n+1) + phosphate = tRNA(n) + a ribonucleoside 5'-diphosphate. Phosphorolytic 3'-5' exoribonuclease that plays an important role in tRNA 3'-end maturation. Removes nucleotide residues following the 3'-CCA terminus of tRNAs; can also add nucleotides to the ends of RNA molecules by using nucleoside diphosphates as substrates, but this may not be physiologically important. Probably plays a role in initiation of 16S rRNA degradation (leading to ribosome degradation) during starvation. This is Ribonuclease PH from Bifidobacterium longum (strain NCC 2705).